Here is an 873-residue protein sequence, read N- to C-terminus: MQSTDTKEKNKNASGAVEHTPLMKQFFAAKSDYPDLLLFFRMGDFYELFYDDARKAARLLDITLTQRGSSGGAPIPMAGVPVHAYEGYLARLVALGESVAICEQIGDPALAKGLVERKVVRIVTPGTVTDEALLDERRDTLLMAISRSKHGYGLAWADLAGGRFLVNEVDSADALEAEIARLEPAELLVPDEDNWPDFLRGRTGVRRRPPWLFDADSGRRQLLAFFKLHDLSGFGIDDKPCATAAAGALLGYVEETQKQRLPHLTSIAMEVASEAISMNAATRRHLELDTRVDGDTRNTLLGVLDSTVTPMGGRLLRRWLHRPLRLRDVLLQRHHAVGTLIDAGADADLREAFRALGDLERILTRVALRSARPRDFSTLRDGLALLPKVRTILAPLDSPRLQTLHAELGEHDATAHLLISAVAETPPLKLSDGGVIATGYDAELDELRRLSTNADQFLIDLEQRERASSGIATLKVGYNRVHGYYIEISKGQAEKAPLHYSRRQTLTNAERYITEELKSFEDKVLSARERSLSREKLLYEGLLDALGTELEGLKRCAGALSELDVLAGFAERAQALDWSQPELDHAPCLRIEHGRHPVVEAVREQPFEPNDLDLHSDRRMLVITGPNMGGKSTYMRQNALIVLLAHIGSYVPASRAVIGPIDRILTRIGAGDDLARGQSTFMVEMAETSYILHHATPQSLVLMDEIGRGTSTYDGLALADAVARHLAHTNRCYTLFATHYFELTALADESHAGGASGIANVHLDAVEHGERLVFMHAVKDGPANRSFGLQVAALAGLPKAAVTQARRRLVELEQRGGESHSAQMAPTALDAPQQFGLFTAPSSAAQEALQALDPDELTPKQALEALYRLKALL.

ATP is bound at residue G625–S632.

This sequence belongs to the DNA mismatch repair MutS family.

Its function is as follows. This protein is involved in the repair of mismatches in DNA. It is possible that it carries out the mismatch recognition step. This protein has a weak ATPase activity. The chain is DNA mismatch repair protein MutS from Xanthomonas euvesicatoria pv. vesicatoria (strain 85-10) (Xanthomonas campestris pv. vesicatoria).